Reading from the N-terminus, the 575-residue chain is Proline--tRNA ligase (575 aa).

Belongs to the class-II aminoacyl-tRNA synthetase family. ProS type 1 subfamily. In terms of assembly, homodimer.

The protein resides in the cytoplasm. The catalysed reaction is tRNA(Pro) + L-proline + ATP = L-prolyl-tRNA(Pro) + AMP + diphosphate. Functionally, catalyzes the attachment of proline to tRNA(Pro) in a two-step reaction: proline is first activated by ATP to form Pro-AMP and then transferred to the acceptor end of tRNA(Pro). As ProRS can inadvertently accommodate and process non-cognate amino acids such as alanine and cysteine, to avoid such errors it has two additional distinct editing activities against alanine. One activity is designated as 'pretransfer' editing and involves the tRNA(Pro)-independent hydrolysis of activated Ala-AMP. The other activity is designated 'posttransfer' editing and involves deacylation of mischarged Ala-tRNA(Pro). The misacylated Cys-tRNA(Pro) is not edited by ProRS. The polypeptide is Proline--tRNA ligase (Desulfitobacterium hafniense (strain DSM 10664 / DCB-2)).